Reading from the N-terminus, the 262-residue chain is Ubiquitin thioesterase otubain-like (262 aa).

One can recognise an OTU domain in the interval 64-262; it reads KFIRRTRPDG…PGHYDILYPN (199 aa). Residue Asp72 is part of the active site. The active-site Nucleophile is Cys75. Residue Ile168 coordinates substrate. His255 is a catalytic residue.

It belongs to the peptidase C65 family.

It catalyses the reaction Thiol-dependent hydrolysis of ester, thioester, amide, peptide and isopeptide bonds formed by the C-terminal Gly of ubiquitin (a 76-residue protein attached to proteins as an intracellular targeting signal).. In terms of biological role, possible hydrolase that can remove conjugated ubiquitin from proteins in vitro and may therefore play an important regulatory role at the level of protein turnover by preventing degradation. In Drosophila melanogaster (Fruit fly), this protein is Ubiquitin thioesterase otubain-like.